Reading from the N-terminus, the 191-residue chain is Leucyl/phenylalanyl-tRNA--protein transferase (191 aa).

This sequence belongs to the L/F-transferase family.

The protein localises to the cytoplasm. It catalyses the reaction N-terminal L-lysyl-[protein] + L-leucyl-tRNA(Leu) = N-terminal L-leucyl-L-lysyl-[protein] + tRNA(Leu) + H(+). The catalysed reaction is N-terminal L-arginyl-[protein] + L-leucyl-tRNA(Leu) = N-terminal L-leucyl-L-arginyl-[protein] + tRNA(Leu) + H(+). The enzyme catalyses L-phenylalanyl-tRNA(Phe) + an N-terminal L-alpha-aminoacyl-[protein] = an N-terminal L-phenylalanyl-L-alpha-aminoacyl-[protein] + tRNA(Phe). Its function is as follows. Functions in the N-end rule pathway of protein degradation where it conjugates Leu, Phe and, less efficiently, Met from aminoacyl-tRNAs to the N-termini of proteins containing an N-terminal arginine or lysine. The protein is Leucyl/phenylalanyl-tRNA--protein transferase of Herpetosiphon aurantiacus (strain ATCC 23779 / DSM 785 / 114-95).